The chain runs to 138 residues: MVLKWVMSTKYVEAGELKEGSYVVIDGEPCRVVEIEKSKTGKHGSAKARIVAVGVFDGGKRTLSLPVDAQVEVPIIEKFTAQILSVSGDVIQLMDMRDYKTIEVPMKYVEEEAKGRLAPGAEVEVWQILDRYKIIRVK.

At lysine 42 the chain carries Hypusine.

This sequence belongs to the eIF-5A family.

Its subcellular location is the cytoplasm. Functionally, functions by promoting the formation of the first peptide bond. In Pyrobaculum aerophilum (strain ATCC 51768 / DSM 7523 / JCM 9630 / CIP 104966 / NBRC 100827 / IM2), this protein is Translation initiation factor 5A (eif5a).